The sequence spans 214 residues: Leucyl/phenylalanyl-tRNA--protein transferase (214 aa).

This sequence belongs to the L/F-transferase family.

The protein resides in the cytoplasm. It carries out the reaction N-terminal L-lysyl-[protein] + L-leucyl-tRNA(Leu) = N-terminal L-leucyl-L-lysyl-[protein] + tRNA(Leu) + H(+). The catalysed reaction is N-terminal L-arginyl-[protein] + L-leucyl-tRNA(Leu) = N-terminal L-leucyl-L-arginyl-[protein] + tRNA(Leu) + H(+). The enzyme catalyses L-phenylalanyl-tRNA(Phe) + an N-terminal L-alpha-aminoacyl-[protein] = an N-terminal L-phenylalanyl-L-alpha-aminoacyl-[protein] + tRNA(Phe). Its function is as follows. Functions in the N-end rule pathway of protein degradation where it conjugates Leu, Phe and, less efficiently, Met from aminoacyl-tRNAs to the N-termini of proteins containing an N-terminal arginine or lysine. This chain is Leucyl/phenylalanyl-tRNA--protein transferase, found in Cereibacter sphaeroides (strain ATCC 17029 / ATH 2.4.9) (Rhodobacter sphaeroides).